The chain runs to 310 residues: Ribosomal RNA small subunit methyltransferase H (310 aa).

S-adenosyl-L-methionine-binding positions include 35–37, aspartate 52, phenylalanine 79, aspartate 100, and glutamine 107; that span reads GGH.

It belongs to the methyltransferase superfamily. RsmH family.

The protein resides in the cytoplasm. It carries out the reaction cytidine(1402) in 16S rRNA + S-adenosyl-L-methionine = N(4)-methylcytidine(1402) in 16S rRNA + S-adenosyl-L-homocysteine + H(+). Specifically methylates the N4 position of cytidine in position 1402 (C1402) of 16S rRNA. This chain is Ribosomal RNA small subunit methyltransferase H, found in Anaeromyxobacter dehalogenans (strain 2CP-1 / ATCC BAA-258).